Reading from the N-terminus, the 341-residue chain is uncharacterized protein (341 aa).

WD repeat units lie at residues 19–59, 106–145, 252–293, and 303–341; these read SLGS…QVHT, GHTD…RCLG, PFSN…HHKG, and VSQS…ALTS.

Its subcellular location is the cytoplasm. The protein localises to the nucleus. This is an uncharacterized protein from Schizosaccharomyces pombe (strain 972 / ATCC 24843) (Fission yeast).